An 89-amino-acid chain; its full sequence is Large ribosomal subunit protein uL29 (89 aa).

This sequence belongs to the universal ribosomal protein uL29 family.

In Frankia alni (strain DSM 45986 / CECT 9034 / ACN14a), this protein is Large ribosomal subunit protein uL29.